The chain runs to 271 residues: Elongation factor Ts (271 aa).

The interval 76–79 (TDFV) is involved in Mg(2+) ion dislocation from EF-Tu.

This sequence belongs to the EF-Ts family.

The protein resides in the cytoplasm. Functionally, associates with the EF-Tu.GDP complex and induces the exchange of GDP to GTP. It remains bound to the aminoacyl-tRNA.EF-Tu.GTP complex up to the GTP hydrolysis stage on the ribosome. The polypeptide is Elongation factor Ts (Mycobacterium bovis (strain BCG / Pasteur 1173P2)).